Consider the following 173-residue polypeptide: EDLRNVTPPKVSLFEPSKAEIANKQKATLVCLARGFFPDHVELSWWVNGKEVHSGVSTDPQAYKESNYSYCLSSRLRVSATFWHNPRNHFRCQVQFHGLSEEDKWPEGSPKPVTQNISAEAWGRADCGITSASYQQGVLSATILYEILLGKATLYAVLVSTLVVMAMVKRKNS.

Residues 1-146 form a c region region; sequence EDLRNVTPPK…GVLSATILYE (146 aa). Cys-31 and Cys-71 are joined by a disulfide. Residues Asn-67 and Asn-116 are each glycosylated (N-linked (GlcNAc...) asparagine). A helical transmembrane segment spans residues 146–167; sequence EILLGKATLYAVLVSTLVVMAM. The Cytoplasmic portion of the chain corresponds to 168-173; sequence VKRKNS.

It localises to the membrane. The protein is T-cell receptor beta-1 chain C region of Mus musculus (Mouse).